We begin with the raw amino-acid sequence, 334 residues long: 2,3-bisphosphoglycerate-dependent phosphoglycerate mutase 1 (334 aa).

A chloroplast-targeting transit peptide spans 1–48 (MATATSHQSVVSFASLRSSPSSTISQCGFKIDSSLSFTSKKTNFCKIK). Substrate is bound by residues 84–91 (RHGESLWN), 97–98 (TG), R134, 188–191 (ERMY), K199, 215–216 (RR), and 259–260 (GN). The active-site Tele-phosphohistidine intermediate is H85. E188 serves as the catalytic Proton donor/acceptor.

Belongs to the phosphoglycerate mutase family. BPG-dependent PGAM subfamily.

The protein localises to the plastid. The protein resides in the chloroplast. It catalyses the reaction (2R)-2-phosphoglycerate = (2R)-3-phosphoglycerate. It functions in the pathway carbohydrate degradation; glycolysis; pyruvate from D-glyceraldehyde 3-phosphate: step 3/5. Catalyzes the interconversion of 2-phosphoglycerate and 3-phosphoglycerate. This Arabidopsis thaliana (Mouse-ear cress) protein is 2,3-bisphosphoglycerate-dependent phosphoglycerate mutase 1.